We begin with the raw amino-acid sequence, 307 residues long: Putative ankyrin repeat protein R229 (307 aa).

6 ANK repeats span residues Ala-135–Val-164, Asp-165–Ala-194, Asp-196–Ala-224, Asn-226–Ala-254, Arg-256–Tyr-284, and Ser-286–Asp-307.

In Acanthamoeba polyphaga (Amoeba), this protein is Putative ankyrin repeat protein R229.